A 395-amino-acid chain; its full sequence is MSVIRVTDLDLKGKRVFIRADLNVPVKDGKVTSDARISASMGTIDYCLKQGGKVMVTSHLGRPEEGVWSEENSLKPVADNISERLGKPARLIKDWVDGNFDVAEGELVILENCRFNKGEKKNADETAQKYAKLCDVFVMDAFGTAHRAEASTYGIAKYAPVACAGILLTEELDALTKALLNPARPMVAIVGGSKVSTKLTVLESLSEKVDQLVVGGGIANTFLKAAGQNVGKSLCEDDLVPIAKMLMEKMAKRNATIPIAVDVVVGKKFDASEPAVLKNADAVTDDDMIFDIGPKSARELSDIIMKAGTVVWNGPVGVFEFDQFGEGTKTIAMAIADTDAFTLAGGGDTIAAIQKYDIYDRVSYISTAGGAFLEFLEGKKLPAVEILEQRAAGSR.

Substrate is bound by residues 21-23, Arg36, 59-62, Arg114, and Arg147; these read DLN and HLGR. Residues Lys198, Glu320, and 346-349 each bind ATP; that span reads GGDT.

Belongs to the phosphoglycerate kinase family. Monomer.

The protein localises to the cytoplasm. It catalyses the reaction (2R)-3-phosphoglycerate + ATP = (2R)-3-phospho-glyceroyl phosphate + ADP. It functions in the pathway carbohydrate degradation; glycolysis; pyruvate from D-glyceraldehyde 3-phosphate: step 2/5. This Nitrosospira multiformis (strain ATCC 25196 / NCIMB 11849 / C 71) protein is Phosphoglycerate kinase.